The following is a 380-amino-acid chain: MVAGAEVMHQVVPLLEASFHRRCSVKGVDEVSPPVEEMSPEAASEAAIEVPELMVKAPVESLQFSPNIRSGSFADIGPRRYMEDEHIRIDDLSGHLGSLLMCPAPNAFYGVFDGHGGPDAAAYMKRHAIRLFFEDSEFPQALEEDESFYESVEKSIHNAFLSADLALADDLAISRSSGTTALAALIFGRQLLVANAGDCRAVLCRKGVAVEMSRDHRPTYDAEHERITECGGYIEDGYLNGVLSVTRALGDWDMKMPQGSRSPLIAEPEFQQTTLTEDDEFLIIGCDGIWDVMSSQHAVTIVRKGLRRHDDPERCARELAMEAKRLQTFDNLTVIVICFGSELGGGSPSSEQAPIRRVRCCKSLSSEALCNLKKWLEPNE.

Residues arginine 69–phenylalanine 339 enclose the PPM-type phosphatase domain. Mn(2+)-binding residues include aspartate 113, glycine 114, aspartate 287, and aspartate 330.

It belongs to the PP2C family. Requires Mg(2+) as cofactor. The cofactor is Mn(2+).

The catalysed reaction is O-phospho-L-seryl-[protein] + H2O = L-seryl-[protein] + phosphate. It carries out the reaction O-phospho-L-threonyl-[protein] + H2O = L-threonyl-[protein] + phosphate. This Oryza sativa subsp. japonica (Rice) protein is Probable protein phosphatase 2C 2.